The primary structure comprises 751 residues: Phosphate transporter PHO1 homolog 8 (751 aa).

In terms of domain architecture, SPX spans 1 to 299; sequence MKFGKEYVAQ…LRNAAKLYME (299 aa). Residues 1–351 lie on the Cytoplasmic side of the membrane; the sequence is MKFGKEYVAQ…KVTKEKHRIT (351 aa). Residues 352–372 traverse the membrane as a helical segment; it reads FSTGFFVGCTVSLVIALGLFI. Residues 373-392 are Extracellular-facing; it reads HARNIMGAVGHKLYMETMFP. Residues 393-413 traverse the membrane as a helical segment; that stretch reads LYSLFAFVVLHMIMYASNIYF. Residues 414–434 lie on the Cytoplasmic side of the membrane; it reads WKRYRVNYPFIFGFKEGTELG. A helical transmembrane segment spans residues 435–455; it reads YGHVLLLSFGLGTLALCAVLV. Topologically, residues 456 to 473 are extracellular; the sequence is NMDMEMDPNTNDYKTITE. Residues 474–494 form a helical membrane-spanning segment; sequence LVPLFVVALVIAISVCPFNIF. Residues 495–623 lie on the Cytoplasmic side of the membrane; it reads YRSSRFFFLM…FSINRGNDWK (129 aa). One can recognise an EXS domain in the interval 558 to 751; sequence KSSDVYSTFY…NYDEEEDRDS (194 aa). The chain crosses the membrane as a helical span at residues 624 to 644; sequence IAAWVFSGLATFYGTYWDIVY. Residues 645–667 lie on the Extracellular side of the membrane; it reads DWGLLHRPSKSWLREKLLVPHKS. The chain crosses the membrane as a helical span at residues 668-688; the sequence is VYYVAMVVNVVLRLAWLQTVL. Topologically, residues 689–751 are cytoplasmic; that stretch reads DFNISFLHRE…NYDEEEDRDS (63 aa).

This sequence belongs to the SYG1 (TC 2.A.94) family. Expressed in root epidermis, leaf hydathodes, trichomes and petioles, stem vascular cylinder, receptacle, stigma apex and pollen grains.

The protein localises to the cell membrane. In terms of biological role, may transport inorganic phosphate (Pi). The protein is Phosphate transporter PHO1 homolog 8 (PHO1-H8) of Arabidopsis thaliana (Mouse-ear cress).